Consider the following 386-residue polypeptide: L-lactate dehydrogenase (386 aa).

An FMN hydroxy acid dehydrogenase domain is found at 1-380 (MIISAASDYR…SGDALSRVTR (380 aa)). A substrate-binding site is contributed by Tyr24. Residues Ser106 and Gln127 each coordinate FMN. Tyr129 contributes to the substrate binding site. Thr155 lines the FMN pocket. Substrate is bound at residue Arg164. Lys251 lines the FMN pocket. His275 serves as the catalytic Proton acceptor. Arg278 contacts substrate. 306 to 330 (DSGIRSGLDVVRMLALGADAVLLGR) contacts FMN.

It belongs to the FMN-dependent alpha-hydroxy acid dehydrogenase family. It depends on FMN as a cofactor.

It is found in the cell inner membrane. The enzyme catalyses (S)-lactate + A = pyruvate + AH2. Catalyzes the conversion of L-lactate to pyruvate. Is coupled to the respiratory chain. This Xanthomonas campestris pv. campestris (strain 8004) protein is L-lactate dehydrogenase.